The sequence spans 81 residues: U6-theraphotoxin-Hs1a (81 aa).

An N-terminal signal peptide occupies residues 1–21; sequence MKASMFLALAGLVLLFVVCYA. The propeptide occupies 22–48; it reads SESEEKEFPRELLSTIFAVDDFKGEER. Cystine bridges form between cysteine 50–cysteine 65 and cysteine 57–cysteine 70.

Belongs to the neurotoxin 10 (Hwtx-1) family. 51 (Hntx-8) subfamily. As to expression, expressed by the venom gland.

The protein localises to the secreted. Functionally, binds to the nicotinic acetylcholine receptor. Blocks neuromuscular transmission. The protein is U6-theraphotoxin-Hs1a of Cyriopagopus schmidti (Chinese bird spider).